Reading from the N-terminus, the 790-residue chain is Choline transporter-like 2 (790 aa).

The helical transmembrane segment at 47–67 (PCLFLFVTFLCAWGYVAYYAV) threads the bilayer. 2 N-linked (GlcNAc...) asparagine glycosylation sites follow: Asn102 and Asn259. Transmembrane regions (helical) follow at residues 288 to 308 (IITPYLITIHNITVLLTFQMI), 319 to 339 (ILVFIACSVLASLILIAMLRW), and 344 to 364 (LVWISIIGVITALSYGVYYSF). Asn384 carries N-linked (GlcNAc...) asparagine glycosylation. The next 2 helical transmembrane spans lie at 400-420 (LWILIALSVILIVLLLVVLVL) and 449-469 (LVPWILQAVVIVFSLLVLLFL). Asn483 is a glycosylation site (N-linked (GlcNAc...) asparagine). A run of 4 helical transmembrane segments spans residues 545–565 (VIGFFWCICFVSAFSEMVLAF), 592–612 (VYYHLGTLAFGSLIIAICKII), 691–711 (VTGFLFFLSKLLLASGMAAVT), and 728–748 (FVPAVLVFIGTFIIASIFFSV).

It belongs to the CTL (choline transporter-like) family.

The protein localises to the membrane. The sequence is that of Choline transporter-like 2 from Anopheles gambiae (African malaria mosquito).